The following is a 67-amino-acid chain: Large ribosomal subunit protein bL35 (67 aa).

It belongs to the bacterial ribosomal protein bL35 family.

The polypeptide is Large ribosomal subunit protein bL35 (Dehalococcoides mccartyi (strain ATCC BAA-2100 / JCM 16839 / KCTC 5957 / BAV1)).